Consider the following 431-residue polypeptide: Glutamate-1-semialdehyde 2,1-aminomutase 1 (431 aa).

N6-(pyridoxal phosphate)lysine is present on Lys-268.

The protein belongs to the class-III pyridoxal-phosphate-dependent aminotransferase family. HemL subfamily. Homodimer. It depends on pyridoxal 5'-phosphate as a cofactor.

Its subcellular location is the cytoplasm. The enzyme catalyses (S)-4-amino-5-oxopentanoate = 5-aminolevulinate. The protein operates within porphyrin-containing compound metabolism; protoporphyrin-IX biosynthesis; 5-aminolevulinate from L-glutamyl-tRNA(Glu): step 2/2. This Bacillus pumilus (strain SAFR-032) protein is Glutamate-1-semialdehyde 2,1-aminomutase 1.